Reading from the N-terminus, the 318-residue chain is Lysophospholipase D GDPD3 (318 aa).

Over 1 to 2 the chain is Cytoplasmic; the sequence is MS. Residues 3–23 form a helical membrane-spanning segment; that stretch reads LLLYYALPALGSYAMLSIFFL. Residues 24–198 are Extracellular-facing; it reads RRPHLLHTPR…KAANPEMPLS (175 aa). The 270-residue stretch at 39–308 folds into the GP-PDE domain; sequence IRLGAHRGGS…DYPTALRHYL (270 aa). A divalent metal cation contacts are provided by Glu71, Asp73, and His86. Residues 199–221 traverse the membrane as a helical segment; that stretch reads FTISRGFWVLLSYYLGLLPFIPI. Residues 222 to 318 lie on the Cytoplasmic side of the membrane; sequence PEKFFFCFLP…DNHGPAARTS (97 aa).

Belongs to the glycerophosphoryl diester phosphodiesterase family. As to expression, widely expressed, with high level in kidney and ovary.

Its subcellular location is the membrane. It is found in the cytoplasm. The protein resides in the perinuclear region. The protein localises to the endoplasmic reticulum. It carries out the reaction 1-hexadecanoyl-sn-glycero-3-phosphocholine + H2O = 1-hexadecanoyl-sn-glycero-3-phosphate + choline + H(+). It catalyses the reaction 1-hexadecanoyl-sn-glycero-3-phosphocholine + H2O = sn-glycerol 3-phosphocholine + hexadecanoate + H(+). The catalysed reaction is 1-O-(1Z-octadecenyl)-sn-glycero-3-phospho-N-hexadecanoyl-ethanolamine + H2O = 1-O-(1Z-octadecenyl)-sn-glycero-3-phosphate + N-hexadecanoylethanolamine + H(+). The enzyme catalyses N-(5Z,8Z,11Z,14Z-eicosatetraenoyl)-1-(9Z-octadecenoyl)-sn-glycero-3-phosphoethanolamine + H2O = N-(5Z,8Z,11Z,14Z-eicosatetraenoyl)-ethanolamine + 1-(9Z-octadecenoyl)-sn-glycero-3-phosphate + H(+). It carries out the reaction N,1-di-(9Z-octadecenoyl)-sn-glycero-3-phosphoethanolamine + H2O = N-(9Z-octadecenoyl) ethanolamine + 1-(9Z-octadecenoyl)-sn-glycero-3-phosphate + H(+). It catalyses the reaction N-hexadecanoyl-1-(9Z-octadecenoyl)-sn-glycero-3-phosphoethanolamine + H2O = N-hexadecanoylethanolamine + 1-(9Z-octadecenoyl)-sn-glycero-3-phosphate + H(+). The catalysed reaction is 1-O-hexadecyl-sn-glycero-3-phosphocholine + H2O = 1-O-hexadecyl-sn-glycero-3-phosphate + choline + H(+). With respect to regulation, lysophospholipase D activity is stimulated by calcium. Loss of lysophospholipase D activity in presence of EDTA. Functionally, hydrolyzes lysoglycerophospholipids to produce lysophosphatidic acid (LPA) and the corresponding amines. Shows a preference for 1-O-alkyl-sn-glycero-3-phosphocholine (lyso-PAF), lysophosphatidylcholine (lyso-PC) and N-acylethanolamine lysophospholipids. Does not display glycerophosphodiester phosphodiesterase activity, since it cannot hydrolyze either glycerophosphoinositol or glycerophosphocholine. This Homo sapiens (Human) protein is Lysophospholipase D GDPD3.